The sequence spans 155 residues: 3-dehydroquinate dehydratase (155 aa).

Tyr-31 acts as the Proton acceptor in catalysis. Substrate contacts are provided by Asn-83, His-89, and Asp-96. Catalysis depends on His-109, which acts as the Proton donor. Substrate is bound by residues Leu-110–Ser-111 and Arg-120.

The protein belongs to the type-II 3-dehydroquinase family. As to quaternary structure, homododecamer.

The enzyme catalyses 3-dehydroquinate = 3-dehydroshikimate + H2O. The protein operates within metabolic intermediate biosynthesis; chorismate biosynthesis; chorismate from D-erythrose 4-phosphate and phosphoenolpyruvate: step 3/7. Functionally, catalyzes a trans-dehydration via an enolate intermediate. The chain is 3-dehydroquinate dehydratase from Laribacter hongkongensis (strain HLHK9).